Reading from the N-terminus, the 417-residue chain is Gamma-glutamyl phosphate reductase (417 aa).

The protein belongs to the gamma-glutamyl phosphate reductase family.

It localises to the cytoplasm. The enzyme catalyses L-glutamate 5-semialdehyde + phosphate + NADP(+) = L-glutamyl 5-phosphate + NADPH + H(+). Its pathway is amino-acid biosynthesis; L-proline biosynthesis; L-glutamate 5-semialdehyde from L-glutamate: step 2/2. Catalyzes the NADPH-dependent reduction of L-glutamate 5-phosphate into L-glutamate 5-semialdehyde and phosphate. The product spontaneously undergoes cyclization to form 1-pyrroline-5-carboxylate. The polypeptide is Gamma-glutamyl phosphate reductase (Escherichia coli O6:K15:H31 (strain 536 / UPEC)).